A 338-amino-acid chain; its full sequence is Anthranilate phosphoribosyltransferase (338 aa).

Residues Gly81, 84–85 (GD), Thr89, 91–94 (NIST), 109–117 (KHGNRNLSS), and Ala121 contribute to the 5-phospho-alpha-D-ribose 1-diphosphate site. Gly81 contributes to the anthranilate binding site. Ser93 is a binding site for Mg(2+). Asn112 contacts anthranilate. Arg167 is an anthranilate binding site. Mg(2+) is bound by residues Asp226 and Glu227.

This sequence belongs to the anthranilate phosphoribosyltransferase family. In terms of assembly, homodimer. The cofactor is Mg(2+).

It catalyses the reaction N-(5-phospho-beta-D-ribosyl)anthranilate + diphosphate = 5-phospho-alpha-D-ribose 1-diphosphate + anthranilate. The protein operates within amino-acid biosynthesis; L-tryptophan biosynthesis; L-tryptophan from chorismate: step 2/5. Its function is as follows. Catalyzes the transfer of the phosphoribosyl group of 5-phosphorylribose-1-pyrophosphate (PRPP) to anthranilate to yield N-(5'-phosphoribosyl)-anthranilate (PRA). In Cereibacter sphaeroides (strain KD131 / KCTC 12085) (Rhodobacter sphaeroides), this protein is Anthranilate phosphoribosyltransferase.